The sequence spans 413 residues: Tryptophan synthase beta chain (413 aa).

N6-(pyridoxal phosphate)lysine is present on Lys-106.

It belongs to the TrpB family. Tetramer of two alpha and two beta chains. Requires pyridoxal 5'-phosphate as cofactor.

It catalyses the reaction (1S,2R)-1-C-(indol-3-yl)glycerol 3-phosphate + L-serine = D-glyceraldehyde 3-phosphate + L-tryptophan + H2O. It participates in amino-acid biosynthesis; L-tryptophan biosynthesis; L-tryptophan from chorismate: step 5/5. In terms of biological role, the beta subunit is responsible for the synthesis of L-tryptophan from indole and L-serine. The protein is Tryptophan synthase beta chain of Methylorubrum populi (strain ATCC BAA-705 / NCIMB 13946 / BJ001) (Methylobacterium populi).